The following is a 240-amino-acid chain: Ubiquinone biosynthesis O-methyltransferase (240 aa).

Residues arginine 44, glycine 64, aspartate 85, and methionine 129 each contribute to the S-adenosyl-L-methionine site.

The protein belongs to the methyltransferase superfamily. UbiG/COQ3 family.

It catalyses the reaction a 3-demethylubiquinol + S-adenosyl-L-methionine = a ubiquinol + S-adenosyl-L-homocysteine + H(+). It carries out the reaction a 3-(all-trans-polyprenyl)benzene-1,2-diol + S-adenosyl-L-methionine = a 2-methoxy-6-(all-trans-polyprenyl)phenol + S-adenosyl-L-homocysteine + H(+). It functions in the pathway cofactor biosynthesis; ubiquinone biosynthesis. In terms of biological role, O-methyltransferase that catalyzes the 2 O-methylation steps in the ubiquinone biosynthetic pathway. The polypeptide is Ubiquinone biosynthesis O-methyltransferase (Escherichia coli O127:H6 (strain E2348/69 / EPEC)).